The chain runs to 129 residues: Follitropin subunit beta (129 aa).

The signal sequence occupies residues 1–18 (MKSVQFCFLFCCWKAICC). Disulfide bonds link Cys-21/Cys-69, Cys-35/Cys-84, Cys-38/Cys-122, Cys-46/Cys-100, Cys-50/Cys-102, and Cys-105/Cys-112. Residues Asn-25 and Asn-42 are each glycosylated (N-linked (GlcNAc...) asparagine).

Belongs to the glycoprotein hormones subunit beta family. Heterodimer. The active follitropin is a heterodimer composed of an alpha chain/CGA shared with other hormones and a unique beta chain/FSHB shown here.

The protein localises to the secreted. Its function is as follows. Together with the alpha chain CGA constitutes follitropin, the follicle-stimulating hormone, and provides its biological specificity to the hormone heterodimer. Binds FSHR, a G protein-coupled receptor, on target cells to activate downstream signaling pathways. Follitropin is involved in follicle development and spermatogenesis in reproductive organs. This Oryctolagus cuniculus (Rabbit) protein is Follitropin subunit beta (FSHB).